We begin with the raw amino-acid sequence, 365 residues long: Flagellar P-ring protein (365 aa).

The signal sequence occupies residues 1–19 (MIKFLSALILLLVTTAAQA).

Belongs to the FlgI family. The basal body constitutes a major portion of the flagellar organelle and consists of four rings (L,P,S, and M) mounted on a central rod.

The protein localises to the periplasm. It is found in the bacterial flagellum basal body. In terms of biological role, assembles around the rod to form the L-ring and probably protects the motor/basal body from shearing forces during rotation. The chain is Flagellar P-ring protein from Shigella dysenteriae serotype 1 (strain Sd197).